Reading from the N-terminus, the 178-residue chain is Large ribosomal subunit protein uL6 (178 aa).

This sequence belongs to the universal ribosomal protein uL6 family. In terms of assembly, part of the 50S ribosomal subunit. Interacts weakly with protein L13.

Functionally, this protein binds to the 23S rRNA, and is important in its secondary structure. It is located near the subunit interface in the base of the L7/L12 stalk, and near the tRNA binding site of the peptidyltransferase center. In Haloarcula marismortui (strain ATCC 43049 / DSM 3752 / JCM 8966 / VKM B-1809) (Halobacterium marismortui), this protein is Large ribosomal subunit protein uL6.